The sequence spans 259 residues: Dihydroorotate dehydrogenase B (NAD(+)), electron transfer subunit (259 aa).

The region spanning 2 to 102 (MQKQNMIVVN…LGPLGHGFPV (101 aa)) is the FAD-binding FR-type domain. Residues 53-56 (RPIS), 70-72 (LYR), and 77-78 (GT) contribute to the FAD site. 4 residues coordinate [2Fe-2S] cluster: cysteine 221, cysteine 226, cysteine 229, and cysteine 246.

Belongs to the PyrK family. In terms of assembly, heterotetramer of 2 PyrK and 2 PyrD type B subunits. [2Fe-2S] cluster serves as cofactor. It depends on FAD as a cofactor.

It functions in the pathway pyrimidine metabolism; UMP biosynthesis via de novo pathway; orotate from (S)-dihydroorotate (NAD(+) route): step 1/1. Responsible for channeling the electrons from the oxidation of dihydroorotate from the FMN redox center in the PyrD type B subunit to the ultimate electron acceptor NAD(+). The chain is Dihydroorotate dehydrogenase B (NAD(+)), electron transfer subunit from Bacillus cereus (strain Q1).